The sequence spans 525 residues: GMP synthase [glutamine-hydrolyzing] (525 aa).

The region spanning 9-207 is the Glutamine amidotransferase type-1 domain; that stretch reads RILILDFGSQ…VLDVCQCEAL (199 aa). Cys-86 functions as the Nucleophile in the catalytic mechanism. Catalysis depends on residues His-181 and Glu-183. Residues 208 to 400 form the GMPS ATP-PPase domain; sequence WTPASIIEDT…LGLPYDMLNR (193 aa). 235–241 serves as a coordination point for ATP; the sequence is SGGVDSS.

Homodimer.

The catalysed reaction is XMP + L-glutamine + ATP + H2O = GMP + L-glutamate + AMP + diphosphate + 2 H(+). Its pathway is purine metabolism; GMP biosynthesis; GMP from XMP (L-Gln route): step 1/1. In terms of biological role, catalyzes the synthesis of GMP from XMP. This chain is GMP synthase [glutamine-hydrolyzing], found in Photorhabdus laumondii subsp. laumondii (strain DSM 15139 / CIP 105565 / TT01) (Photorhabdus luminescens subsp. laumondii).